A 91-amino-acid polypeptide reads, in one-letter code: Uteroglobin (91 aa).

Residues 1-21 (MKLAITLALVTLALLCSPASA) form the signal peptide.

Belongs to the secretoglobin family. In terms of assembly, antiparallel homodimer; disulfide-linked. Interaction with LMBR1L is controversial. Synthesized in the uterus and lung.

The protein localises to the secreted. Uteroglobin binds progesterone specifically and with high affinity. It may regulate progesterone concentrations reaching the blastocyst. It is also a potent inhibitor of phospholipase A2. This is Uteroglobin (SCGB1A1) from Oryctolagus cuniculus (Rabbit).